Reading from the N-terminus, the 466-residue chain is 3-isopropylmalate dehydratase large subunit (466 aa).

Cysteine 347, cysteine 407, and cysteine 410 together coordinate [4Fe-4S] cluster.

Belongs to the aconitase/IPM isomerase family. LeuC type 1 subfamily. In terms of assembly, heterodimer of LeuC and LeuD. [4Fe-4S] cluster serves as cofactor.

The enzyme catalyses (2R,3S)-3-isopropylmalate = (2S)-2-isopropylmalate. It functions in the pathway amino-acid biosynthesis; L-leucine biosynthesis; L-leucine from 3-methyl-2-oxobutanoate: step 2/4. Functionally, catalyzes the isomerization between 2-isopropylmalate and 3-isopropylmalate, via the formation of 2-isopropylmaleate. The polypeptide is 3-isopropylmalate dehydratase large subunit (Escherichia coli O157:H7).